The sequence spans 179 residues: Protein GrpE (179 aa).

The disordered stretch occupies residues 1–29; it reads MQDQDKYAEQAASIEDPVTAEAASATTPT.

It belongs to the GrpE family. As to quaternary structure, homodimer.

The protein localises to the cytoplasm. Participates actively in the response to hyperosmotic and heat shock by preventing the aggregation of stress-denatured proteins, in association with DnaK and GrpE. It is the nucleotide exchange factor for DnaK and may function as a thermosensor. Unfolded proteins bind initially to DnaJ; upon interaction with the DnaJ-bound protein, DnaK hydrolyzes its bound ATP, resulting in the formation of a stable complex. GrpE releases ADP from DnaK; ATP binding to DnaK triggers the release of the substrate protein, thus completing the reaction cycle. Several rounds of ATP-dependent interactions between DnaJ, DnaK and GrpE are required for fully efficient folding. The protein is Protein GrpE of Janthinobacterium sp. (strain Marseille) (Minibacterium massiliensis).